The sequence spans 183 residues: Peptidyl-tRNA hydrolase (183 aa).

Tyr-15 is a binding site for tRNA. His-20 functions as the Proton acceptor in the catalytic mechanism. TRNA contacts are provided by Tyr-67 and Asn-69.

The protein belongs to the PTH family. In terms of assembly, monomer.

It localises to the cytoplasm. It carries out the reaction an N-acyl-L-alpha-aminoacyl-tRNA + H2O = an N-acyl-L-amino acid + a tRNA + H(+). Functionally, hydrolyzes ribosome-free peptidyl-tRNAs (with 1 or more amino acids incorporated), which drop off the ribosome during protein synthesis, or as a result of ribosome stalling. Its function is as follows. Catalyzes the release of premature peptidyl moieties from peptidyl-tRNA molecules trapped in stalled 50S ribosomal subunits, and thus maintains levels of free tRNAs and 50S ribosomes. The polypeptide is Peptidyl-tRNA hydrolase (Chlamydia abortus (strain DSM 27085 / S26/3) (Chlamydophila abortus)).